Consider the following 198-residue polypeptide: Fe/S biogenesis protein NfuA (198 aa).

[4Fe-4S] cluster contacts are provided by Cys-155 and Cys-158.

The protein belongs to the NfuA family. As to quaternary structure, homodimer. [4Fe-4S] cluster is required as a cofactor.

Functionally, involved in iron-sulfur cluster biogenesis. Binds a 4Fe-4S cluster, can transfer this cluster to apoproteins, and thereby intervenes in the maturation of Fe/S proteins. Could also act as a scaffold/chaperone for damaged Fe/S proteins. The polypeptide is Fe/S biogenesis protein NfuA (Haemophilus influenzae (strain 86-028NP)).